Here is a 259-residue protein sequence, read N- to C-terminus: Small ribosomal subunit protein uS2 (259 aa).

The protein belongs to the universal ribosomal protein uS2 family.

The polypeptide is Small ribosomal subunit protein uS2 (Streptococcus pneumoniae serotype 2 (strain D39 / NCTC 7466)).